The primary structure comprises 659 residues: Macrolide export ATP-binding/permease protein MacB (659 aa).

In terms of domain architecture, ABC transporter spans I10–S249. ATP is bound at residue G47–S54. 4 helical membrane-spanning segments follow: residues S287 to G307, L538 to L558, I594 to W614, and V619 to F639.

The protein belongs to the ABC transporter superfamily. Macrolide exporter (TC 3.A.1.122) family. In terms of assembly, homodimer.

Its subcellular location is the cell inner membrane. In terms of biological role, non-canonical ABC transporter that contains transmembrane domains (TMD), which form a pore in the inner membrane, and an ATP-binding domain (NBD), which is responsible for energy generation. Confers resistance against macrolides. This is Macrolide export ATP-binding/permease protein MacB from Nitrosomonas europaea (strain ATCC 19718 / CIP 103999 / KCTC 2705 / NBRC 14298).